A 242-amino-acid polypeptide reads, in one-letter code: Uridylate kinase (242 aa).

11-14 (KLSG) serves as a coordination point for ATP. The tract at residues 19–24 (GEKGAG) is involved in allosteric activation by GTP. UMP is bound at residue Gly-53. The ATP site is built by Gly-54 and Arg-58. Residues Asp-73 and 134 to 141 (IGSPYFST) contribute to the UMP site. Residues Asn-162, Tyr-168, and Asp-171 each coordinate ATP.

The protein belongs to the UMP kinase family. In terms of assembly, homohexamer.

The protein resides in the cytoplasm. It carries out the reaction UMP + ATP = UDP + ADP. Its pathway is pyrimidine metabolism; CTP biosynthesis via de novo pathway; UDP from UMP (UMPK route): step 1/1. Allosterically activated by GTP. Inhibited by UTP. Its function is as follows. Catalyzes the reversible phosphorylation of UMP to UDP. The sequence is that of Uridylate kinase from Streptococcus pyogenes serotype M2 (strain MGAS10270).